Here is a 372-residue protein sequence, read N- to C-terminus: MNHCQLPVVIDNGSGMIKAGVAGCREPQFIYPNIIGRAKGQSRAAQGGLELCVGDQAQDWRSSLFISYPVERGLITSWEDMEIMWKHIYDYNLKLKPCDGPVLITEPALNPLANRQQITEMFFEHLGVPAFYMSIQAVLALFAAGFTTGLVLNSGAGVTQSVPIFEGYCLPHGVQQLDLAGLDLTNYLMVLMKNHGIMLLSASDRKIVEDIKESFCYVAMNYEEEMAKKPDCLEKVYQLPDGKVIQLHDQLFSCPEALFSPCHMNLEAPGIDKICFSSIMKCDTGLRNSFFSNIILAGGSTSFPGLDKRLVKDIAKVAPANTAVQVIAPPERKISVWMGGSILASLSAFQDMWITAAEFKEVGPNIVHQRCF.

Belongs to the actin family. In terms of assembly, interacts with PFN3. In terms of tissue distribution, ubiquitously expressed.

It localises to the cytoplasm. It is found in the cytoskeleton. Its subcellular location is the nucleus. The chain is Actin-related protein T3 (ACTRT3) from Homo sapiens (Human).